A 753-amino-acid polypeptide reads, in one-letter code: Catalase-peroxidase (753 aa).

The tryptophyl-tyrosyl-methioninium (Trp-Tyr) (with M-269) cross-link spans 91 to 243 (WHSAGTYRIG…LGAVQMGLIY (153 aa)). The active-site Proton acceptor is the H92. Positions 243–269 (YVNPEGPDGNPDPLAAAHDIRETFARM) form a cross-link, tryptophyl-tyrosyl-methioninium (Tyr-Met) (with W-91). Residue H284 coordinates heme b.

It belongs to the peroxidase family. Peroxidase/catalase subfamily. In terms of assembly, homodimer or homotetramer. The cofactor is heme b. Formation of the three residue Trp-Tyr-Met cross-link is important for the catalase, but not the peroxidase activity of the enzyme.

It catalyses the reaction H2O2 + AH2 = A + 2 H2O. The catalysed reaction is 2 H2O2 = O2 + 2 H2O. Bifunctional enzyme with both catalase and broad-spectrum peroxidase activity. In Paraburkholderia xenovorans (strain LB400), this protein is Catalase-peroxidase.